Reading from the N-terminus, the 86-residue chain is Small ribosomal subunit protein bS20 (86 aa).

Belongs to the bacterial ribosomal protein bS20 family.

In terms of biological role, binds directly to 16S ribosomal RNA. The sequence is that of Small ribosomal subunit protein bS20 from Arthrobacter sp. (strain FB24).